The chain runs to 217 residues: Uracil-DNA glycosylase (217 aa).

Residue aspartate 62 is the Proton acceptor of the active site.

Belongs to the uracil-DNA glycosylase (UDG) superfamily. UNG family.

Its subcellular location is the cytoplasm. It carries out the reaction Hydrolyzes single-stranded DNA or mismatched double-stranded DNA and polynucleotides, releasing free uracil.. In terms of biological role, excises uracil residues from the DNA which can arise as a result of misincorporation of dUMP residues by DNA polymerase or due to deamination of cytosine. This Streptococcus pyogenes serotype M4 (strain MGAS10750) protein is Uracil-DNA glycosylase.